The chain runs to 26 residues: MIXAIVTDIEGTTSDTXFVXNVLFPY.

Belongs to the HAD-like hydrolase superfamily. MasA/MtnC family. Monomer. The cofactor is Mg(2+).

It catalyses the reaction 5-methylsulfanyl-2,3-dioxopentyl phosphate + H2O = 1,2-dihydroxy-5-(methylsulfanyl)pent-1-en-3-one + phosphate. It participates in amino-acid biosynthesis; L-methionine biosynthesis via salvage pathway; L-methionine from S-methyl-5-thio-alpha-D-ribose 1-phosphate: step 3/6. The protein operates within amino-acid biosynthesis; L-methionine biosynthesis via salvage pathway; L-methionine from S-methyl-5-thio-alpha-D-ribose 1-phosphate: step 4/6. Functionally, bifunctional enzyme that catalyzes the enolization of 2,3-diketo-5-methylthiopentyl-1-phosphate (DK-MTP-1-P) into the intermediate 2-hydroxy-3-keto-5-methylthiopentenyl-1-phosphate (HK-MTPenyl-1-P), which is then dephosphorylated to form the acireductone 1,2-dihydroxy-3-keto-5-methylthiopentene (DHK-MTPene). This is Enolase-phosphatase E1 (mtnC) from Klebsiella aerogenes (Enterobacter aerogenes).